Consider the following 298-residue polypeptide: Ribosomal RNA small subunit methyltransferase A (298 aa).

Positions 35, 37, 62, 83, 108, and 133 each coordinate S-adenosyl-L-methionine.

Belongs to the class I-like SAM-binding methyltransferase superfamily. rRNA adenine N(6)-methyltransferase family. RsmA subfamily.

It localises to the cytoplasm. It catalyses the reaction adenosine(1518)/adenosine(1519) in 16S rRNA + 4 S-adenosyl-L-methionine = N(6)-dimethyladenosine(1518)/N(6)-dimethyladenosine(1519) in 16S rRNA + 4 S-adenosyl-L-homocysteine + 4 H(+). Its function is as follows. Specifically dimethylates two adjacent adenosines (A1518 and A1519) in the loop of a conserved hairpin near the 3'-end of 16S rRNA in the 30S particle. May play a critical role in biogenesis of 30S subunits. This Streptococcus pyogenes serotype M12 (strain MGAS9429) protein is Ribosomal RNA small subunit methyltransferase A.